Here is a 150-residue protein sequence, read N- to C-terminus: Large ribosomal subunit protein bL9 (150 aa).

It belongs to the bacterial ribosomal protein bL9 family.

Its function is as follows. Binds to the 23S rRNA. This Vesicomyosocius okutanii subsp. Calyptogena okutanii (strain HA) protein is Large ribosomal subunit protein bL9.